The chain runs to 481 residues: Innexin inx6 (481 aa).

At 1–21 (MYAAVKPLSNYLRLKTVRIYD) the chain is on the cytoplasmic side. Residues 22 to 42 (PIFTLHSKCTIVILLTCTFLL) traverse the membrane as a helical segment. The Extracellular portion of the chain corresponds to 43–144 (SAKQYFGEPI…VTKRMYLRYY (102 aa)). The chain crosses the membrane as a helical span at residues 145–165 (QWVFMILLFQSLLFYFPSFLW). At 166 to 220 (KVWEGQRMEQLCCEVGDALIVEATYRTRLQMLTRYFRAQFAPIHWCYSIKYAFCE) the chain is on the cytoplasmic side. The helical transmembrane segment at 221–241 (LLNVFISILNFWLMDVVFNGF) threads the bilayer. Over 242–302 (WYKYIHALAA…VLPLNILNEK (61 aa)) the chain is Extracellular. A helical transmembrane segment spans residues 303 to 323 (IFAVLYVWFLFIALLAIMNIL). The Cytoplasmic portion of the chain corresponds to 324–481 (YRLLVICCPE…MDRFFHESHA (158 aa)).

This sequence belongs to the pannexin family. As to expression, uniform expression in the imaginal wing disk. Expressed in an outer layer of the pupal developing CNS. Also expressed in pupal retina: cone cells and primary pigment cells.

The protein localises to the cell membrane. The protein resides in the cell junction. It localises to the gap junction. In terms of biological role, structural components of the gap junctions. The protein is Innexin inx6 (Inx6) of Drosophila melanogaster (Fruit fly).